Consider the following 193-residue polypeptide: Holliday junction branch migration complex subunit RuvA (193 aa).

The interval 1-63 (MIHHLKGQLI…EDSHTLYGFA (63 aa)) is domain I. Positions 64–142 (EKSEREIFRL…KVLGDDEVFV (79 aa)) are domain II. A flexible linker region spans residues 143 to 145 (SQS). Positions 145 to 193 (SNTNKEEALSALEILGYNRRQAGKVVEKILKEDPESTVESIIKMALKKL) are domain III.

It belongs to the RuvA family. In terms of assembly, homotetramer. Forms an RuvA(8)-RuvB(12)-Holliday junction (HJ) complex. HJ DNA is sandwiched between 2 RuvA tetramers; dsDNA enters through RuvA and exits via RuvB. An RuvB hexamer assembles on each DNA strand where it exits the tetramer. Each RuvB hexamer is contacted by two RuvA subunits (via domain III) on 2 adjacent RuvB subunits; this complex drives branch migration. In the full resolvosome a probable DNA-RuvA(4)-RuvB(12)-RuvC(2) complex forms which resolves the HJ.

The protein resides in the cytoplasm. In terms of biological role, the RuvA-RuvB-RuvC complex processes Holliday junction (HJ) DNA during genetic recombination and DNA repair, while the RuvA-RuvB complex plays an important role in the rescue of blocked DNA replication forks via replication fork reversal (RFR). RuvA specifically binds to HJ cruciform DNA, conferring on it an open structure. The RuvB hexamer acts as an ATP-dependent pump, pulling dsDNA into and through the RuvAB complex. HJ branch migration allows RuvC to scan DNA until it finds its consensus sequence, where it cleaves and resolves the cruciform DNA. This Christiangramia forsetii (strain DSM 17595 / CGMCC 1.15422 / KT0803) (Gramella forsetii) protein is Holliday junction branch migration complex subunit RuvA.